Here is a 236-residue protein sequence, read N- to C-terminus: C-&gt;U-editing enzyme APOBEC-1 (236 aa).

The 125-residue stretch at lysine 10–leucine 134 folds into the CMP/dCMP-type deaminase domain. Histidine 61 is a binding site for Zn(2+). Glutamate 63 acts as the Proton donor in catalysis. Zn(2+)-binding residues include cysteine 93 and cysteine 96.

This sequence belongs to the cytidine and deoxycytidylate deaminase family. As to quaternary structure, homodimer. Interacts with A1CF; form an mRNA editing complex. Interacts with RBM47; form an mRNA editing complex. Found in a complex with CELF2/CUGBP2 and A1CF. Interacts with HNRPAB. Interacts with SYNCRIP. Zn(2+) is required as a cofactor. Expressed exclusively in the intestine.

It localises to the cytoplasm. The protein localises to the nucleus. The enzyme catalyses a cytidine in mRNA + H2O + H(+) = a uridine in mRNA + NH4(+). The catalysed reaction is cytidine(6666) in apoB mRNA + H2O + H(+) = uridine(6666) in apoB mRNA + NH4(+). Its function is as follows. Cytidine deaminase catalyzing the cytidine to uridine postranscriptional editing of a variety of mRNAs. Form complexes with cofactors that confer differential editing activity and selectivity. Responsible for the postranscriptional editing of a CAA codon for Gln to a UAA codon for stop in the apolipoprotein B mRNA. Also involved in CGA (Arg) to UGA (Stop) editing in the NF1 mRNA. May also play a role in the epigenetic regulation of gene expression by participating in DNA demethylation. The protein is C-&gt;U-editing enzyme APOBEC-1 of Oryctolagus cuniculus (Rabbit).